Here is a 443-residue protein sequence, read N- to C-terminus: C4-dicarboxylate transport protein (443 aa).

9 consecutive transmembrane segments (helical) span residues 10 to 30 (SLYF…HFYP), 46 to 66 (LIKM…IAGM), 78 to 98 (YALL…LIVV), 143 to 163 (IVGA…VIFG), 199 to 219 (PIGA…GSLV), 224 to 244 (LMIC…GGIC), 291 to 311 (VVGL…SIYL), 332 to 352 (ITLL…TGSG), and 354 to 374 (IVLA…LALI).

This sequence belongs to the dicarboxylate/amino acid:cation symporter (DAACS) (TC 2.A.23) family.

The protein localises to the cell inner membrane. Functionally, responsible for the transport of dicarboxylates such as succinate, fumarate, and malate from the periplasm across the membrane. This Pseudomonas fluorescens (strain SBW25) protein is C4-dicarboxylate transport protein.